Here is a 120-residue protein sequence, read N- to C-terminus: Movement protein TGB2 (120 aa).

Over 1-16 the chain is Cytoplasmic; it reads MSSTSEPTYQLAPPDS. A helical transmembrane segment spans residues 17–37; it reads LKQVYLTLAAGFAVGLGIFLL. Residues 38 to 76 are Lumenal-facing; it reads RTNTLPHTGDNIHHLPHGGCYRDGTKSIRYNSPGVATSS. A helical membrane pass occupies residues 77-97; the sequence is NIFLPAVAVLCILALLHVPFF. The Cytoplasmic portion of the chain corresponds to 98–120; it reads QPDRVRRRCCRFYWCADPHHPTV.

The protein belongs to the Tymovirales TGBp2 protein family.

It is found in the host endoplasmic reticulum membrane. In terms of biological role, plays a role in viral cell-to-cell propagation, by facilitating genome transport to neighboring plant cells through plasmosdesmata,. The chain is Movement protein TGB2 (ORF3) from Lolium latent virus (isolate Lolium/USA/US1/-) (LoLV).